The chain runs to 568 residues: U6 small nuclear RNA (adenine-(43)-N(6))-methyltransferase (568 aa).

The tract at residues 1–20 (MSEIDTNDIKKEMDNKNYRD) is disordered. A compositionally biased stretch (basic and acidic residues) spans 7–20 (NDIKKEMDNKNYRD). The S-adenosyl-L-methionine site is built by arginine 117, glycine 151, aspartate 175, and asparagine 250. 3 disordered regions span residues 363–383 (KENN…INNN), 403–431 (NLDS…NNNN), and 503–538 (DPKI…NKNN). Composition is skewed to low complexity over residues 365-383 (NNNI…INNN), 409-431 (NNNN…NNNN), and 507-538 (NNNN…NKNN).

This sequence belongs to the methyltransferase superfamily. METTL16/RlmF family.

It carries out the reaction adenosine in U6 snRNA + S-adenosyl-L-methionine = N(6)-methyladenosine in U6 snRNA + S-adenosyl-L-homocysteine + H(+). Functionally, RNA N6-methyltransferase that mediates N6-methylation of adenine of U6 small nuclear RNA (U6 snRNA). The polypeptide is U6 small nuclear RNA (adenine-(43)-N(6))-methyltransferase (Dictyostelium discoideum (Social amoeba)).